The chain runs to 190 residues: Holliday junction branch migration complex subunit RuvA (190 aa).

The interval 1–64 (MIGKLTGTLL…EDAQLLYGFG (64 aa)) is domain I. The interval 65–137 (TAQERQAFRE…LKGKLGADVG (73 aa)) is domain II. The flexible linker stretch occupies residues 137-141 (GVRAH). The tract at residues 142 to 190 (AANDNQADILQALLALGYNDKEAAAALKALPADVGVSEGIKLALKSLSK) is domain III.

This sequence belongs to the RuvA family. In terms of assembly, homotetramer. Forms an RuvA(8)-RuvB(12)-Holliday junction (HJ) complex. HJ DNA is sandwiched between 2 RuvA tetramers; dsDNA enters through RuvA and exits via RuvB. An RuvB hexamer assembles on each DNA strand where it exits the tetramer. Each RuvB hexamer is contacted by two RuvA subunits (via domain III) on 2 adjacent RuvB subunits; this complex drives branch migration. In the full resolvosome a probable DNA-RuvA(4)-RuvB(12)-RuvC(2) complex forms which resolves the HJ.

Its subcellular location is the cytoplasm. The RuvA-RuvB-RuvC complex processes Holliday junction (HJ) DNA during genetic recombination and DNA repair, while the RuvA-RuvB complex plays an important role in the rescue of blocked DNA replication forks via replication fork reversal (RFR). RuvA specifically binds to HJ cruciform DNA, conferring on it an open structure. The RuvB hexamer acts as an ATP-dependent pump, pulling dsDNA into and through the RuvAB complex. HJ branch migration allows RuvC to scan DNA until it finds its consensus sequence, where it cleaves and resolves the cruciform DNA. The protein is Holliday junction branch migration complex subunit RuvA of Acidovorax ebreus (strain TPSY) (Diaphorobacter sp. (strain TPSY)).